Here is a 96-residue protein sequence, read N- to C-terminus: Iron-sulfur cluster assembly protein CyaY (96 aa).

Belongs to the frataxin family.

Involved in iron-sulfur (Fe-S) cluster assembly. May act as a regulator of Fe-S biogenesis. The sequence is that of Iron-sulfur cluster assembly protein CyaY from Rickettsia bellii (strain RML369-C).